A 93-amino-acid chain; its full sequence is uncharacterized protein (93 aa).

Transmembrane regions (helical) follow at residues 15-35 (MAGLRVLSSMIELTAAIVMLV), 48-68 (ILAIVGPLIFIITMTVGIYQI), and 72-92 (LSYAKLILIFTGVVLILAGVH).

It is found in the cell membrane. This is an uncharacterized protein from Bacillus subtilis (strain 168).